Consider the following 615-residue polypeptide: Translation initiation factor IF-2 (615 aa).

One can recognise a tr-type G domain in the interval 118 to 285 (KRPPIVTVMG…AILTLAEINE (168 aa)). Positions 127–134 (GHVDHGKT) are G1. Residue 127–134 (GHVDHGKT) coordinates GTP. The segment at 152–156 (GITQH) is G2. Positions 173–176 (DTPG) are G3. GTP is bound by residues 173–177 (DTPGH) and 227–230 (NKMD). A G4 region spans residues 227–230 (NKMD). The G5 stretch occupies residues 263-265 (SAI).

The protein belongs to the TRAFAC class translation factor GTPase superfamily. Classic translation factor GTPase family. IF-2 subfamily.

The protein localises to the cytoplasm. Functionally, one of the essential components for the initiation of protein synthesis. Protects formylmethionyl-tRNA from spontaneous hydrolysis and promotes its binding to the 30S ribosomal subunits. Also involved in the hydrolysis of GTP during the formation of the 70S ribosomal complex. The chain is Translation initiation factor IF-2 from Mycoplasmoides gallisepticum (strain R(low / passage 15 / clone 2)) (Mycoplasma gallisepticum).